We begin with the raw amino-acid sequence, 435 residues long: Trigger factor (435 aa).

Residues 163-248 (GDFVTFDFKG…VKEIKVKELP (86 aa)) form the PPIase FKBP-type domain.

This sequence belongs to the FKBP-type PPIase family. Tig subfamily.

Its subcellular location is the cytoplasm. The catalysed reaction is [protein]-peptidylproline (omega=180) = [protein]-peptidylproline (omega=0). Functionally, involved in protein export. Acts as a chaperone by maintaining the newly synthesized protein in an open conformation. Functions as a peptidyl-prolyl cis-trans isomerase. This chain is Trigger factor, found in Geobacter sp. (strain M21).